Consider the following 187-residue polypeptide: Large ribosomal subunit protein eL18x (187 aa).

The disordered stretch occupies residues 150 to 187; sequence HFGPAPGVPHSNTKPYVRHKGRKFEKARGKRKSRGFKV. Residues 165-187 are compositionally biased toward basic residues; sequence YVRHKGRKFEKARGKRKSRGFKV.

The protein belongs to the eukaryotic ribosomal protein eL18 family.

This Arabidopsis thaliana (Mouse-ear cress) protein is Large ribosomal subunit protein eL18x (RPL18C).